We begin with the raw amino-acid sequence, 514 residues long: Peptide chain release factor 3 (514 aa).

The 261-residue stretch at 8 to 268 folds into the tr-type G domain; sequence KKRRTFAIIS…TFLEFAPEPH (261 aa). GTP is bound by residues 17–24, 85–89, and 139–142; these read SHPDAGKT, DTPGH, and NKLD.

The protein belongs to the TRAFAC class translation factor GTPase superfamily. Classic translation factor GTPase family. PrfC subfamily.

The protein localises to the cytoplasm. Increases the formation of ribosomal termination complexes and stimulates activities of RF-1 and RF-2. It binds guanine nucleotides and has strong preference for UGA stop codons. It may interact directly with the ribosome. The stimulation of RF-1 and RF-2 is significantly reduced by GTP and GDP, but not by GMP. The protein is Peptide chain release factor 3 of Streptococcus agalactiae serotype Ia (strain ATCC 27591 / A909 / CDC SS700).